The primary structure comprises 513 residues: Glutamate--tRNA ligase 2 (513 aa).

Residues 11-21 (PSPTGFLHIGS) carry the 'HIGH' region motif. A 'KMSKS' region motif is present at residues 240-244 (KLSKR). Residue Lys243 coordinates ATP. The RPE1 insert domain maps to 335–383 (NTLLRHLPYREEFGGNTERSTAAYIDIREDASTGLTYKLPLAVELPKKF).

This sequence belongs to the class-I aminoacyl-tRNA synthetase family. Glutamate--tRNA ligase type 1 subfamily. Monomer.

It localises to the cytoplasm. It carries out the reaction tRNA(Glu) + L-glutamate + ATP = L-glutamyl-tRNA(Glu) + AMP + diphosphate. Its function is as follows. Catalyzes the attachment of glutamate to tRNA(Glu) in a two-step reaction: glutamate is first activated by ATP to form Glu-AMP and then transferred to the acceptor end of tRNA(Glu). This Rickettsia conorii (strain ATCC VR-613 / Malish 7) protein is Glutamate--tRNA ligase 2.